The chain runs to 407 residues: 1-deoxy-D-xylulose 5-phosphate reductoisomerase (407 aa).

NADPH is bound by residues Thr25, Gly26, Ser27, Ile28, Asn53, and Asn136. 1-deoxy-D-xylulose 5-phosphate is bound at residue Lys137. Glu138 provides a ligand contact to NADPH. Asp162 contacts Mn(2+). Residues Ser163, Glu164, Ser188, and His211 each coordinate 1-deoxy-D-xylulose 5-phosphate. Residue Glu164 participates in Mn(2+) binding. Gly217 provides a ligand contact to NADPH. Ser224, Asn229, Lys230, and Glu233 together coordinate 1-deoxy-D-xylulose 5-phosphate. Glu233 contacts Mn(2+).

Belongs to the DXR family. Mg(2+) is required as a cofactor. The cofactor is Mn(2+).

It carries out the reaction 2-C-methyl-D-erythritol 4-phosphate + NADP(+) = 1-deoxy-D-xylulose 5-phosphate + NADPH + H(+). The protein operates within isoprenoid biosynthesis; isopentenyl diphosphate biosynthesis via DXP pathway; isopentenyl diphosphate from 1-deoxy-D-xylulose 5-phosphate: step 1/6. Catalyzes the NADPH-dependent rearrangement and reduction of 1-deoxy-D-xylulose-5-phosphate (DXP) to 2-C-methyl-D-erythritol 4-phosphate (MEP). This Nitrobacter hamburgensis (strain DSM 10229 / NCIMB 13809 / X14) protein is 1-deoxy-D-xylulose 5-phosphate reductoisomerase.